The chain runs to 205 residues: Superoxide dismutase [Mn] (205 aa).

Mn(2+)-binding residues include histidine 30, histidine 78, aspartate 166, and histidine 170.

This sequence belongs to the iron/manganese superoxide dismutase family. In terms of assembly, homodimer. Requires Mn(2+) as cofactor.

The catalysed reaction is 2 superoxide + 2 H(+) = H2O2 + O2. Its function is as follows. Destroys superoxide anion radicals which are normally produced within the cells and which are toxic to biological systems. This Chlamydia muridarum (strain MoPn / Nigg) protein is Superoxide dismutase [Mn] (sodA).